A 160-amino-acid polypeptide reads, in one-letter code: Phosphopantetheine adenylyltransferase (160 aa).

Residue Thr10 coordinates substrate. ATP is bound by residues 10–11 (TF) and His18. 3 residues coordinate substrate: Lys42, Leu74, and Arg88. ATP is bound by residues 89–91 (GLR), Glu99, and 124–130 (NSFISST).

It belongs to the bacterial CoaD family. In terms of assembly, homohexamer. Mg(2+) serves as cofactor.

It localises to the cytoplasm. It catalyses the reaction (R)-4'-phosphopantetheine + ATP + H(+) = 3'-dephospho-CoA + diphosphate. It participates in cofactor biosynthesis; coenzyme A biosynthesis; CoA from (R)-pantothenate: step 4/5. Its function is as follows. Reversibly transfers an adenylyl group from ATP to 4'-phosphopantetheine, yielding dephospho-CoA (dPCoA) and pyrophosphate. The sequence is that of Phosphopantetheine adenylyltransferase from Aeromonas hydrophila subsp. hydrophila (strain ATCC 7966 / DSM 30187 / BCRC 13018 / CCUG 14551 / JCM 1027 / KCTC 2358 / NCIMB 9240 / NCTC 8049).